A 384-amino-acid polypeptide reads, in one-letter code: Centrosomal protein of 44 kDa (384 aa).

The interval 11 to 188 (RKLEQRLRTL…TKCYSSALVE (178 aa)) is binds with microtubules and centrioles. The segment at 191 to 222 (EEEEPTSDSEGGSHLEHEMESPFETAETTPNS) is disordered. Residues 201 to 210 (GGSHLEHEME) are compositionally biased toward basic and acidic residues. 2 coiled-coil regions span residues 221-260 (NSEQ…KGKI) and 353-378 (TEDS…SKLL).

In terms of assembly, binds to centriolar microtubules.

Its subcellular location is the cytoplasm. It is found in the cytoskeleton. The protein resides in the microtubule organizing center. It localises to the centrosome. The protein localises to the centriole. Its subcellular location is the spindle pole. It is found in the midbody. Centriole-enriched microtubule-binding protein involved in centriole biogenesis. In collaboration with CEP295 and POC1B, is required for the centriole-to-centrosome conversion by ensuring the formation of bona fide centriole wall. Functions as a linker component that maintains centrosome cohesion. Associates with CROCC and regulates its stability and localization to the centrosome. This is Centrosomal protein of 44 kDa (cep44) from Xenopus laevis (African clawed frog).